The primary structure comprises 365 residues: Mitogen-activated protein kinase 13 (365 aa).

Residues 25-308 form the Protein kinase domain; that stretch reads YVSPTHVGSG…AAQALTHPFF (284 aa). ATP is bound at residue 31 to 39; it reads VGSGAYGSV. Ser47 carries the phosphoserine modification. Residue Lys54 participates in ATP binding. The active-site Proton acceptor is the Asp150. A Phosphothreonine; by MAP2K3, MAP2K4, MAP2K6 and MAP2K7 modification is found at Thr180. Residues 180-182 carry the TXY motif; it reads TGY. Tyr182 carries the post-translational modification Phosphotyrosine; by MAP2K3, MAP2K4, MAP2K6 and MAP2K7. Residue Ser350 is modified to Phosphoserine.

It belongs to the protein kinase superfamily. CMGC Ser/Thr protein kinase family. MAP kinase subfamily. As to quaternary structure, interacts with MAPK8IP2. Mg(2+) is required as a cofactor. Post-translationally, dually phosphorylated on Thr-180 and Tyr-182 by MAP2K3/MKK3, MAP2K4/MKK4, MAP2K6/MKK6 and MAP2K7/MKK7, which activates the enzyme. Dephosphorylated by dual specificity phosphatase DUSP1.

The enzyme catalyses L-seryl-[protein] + ATP = O-phospho-L-seryl-[protein] + ADP + H(+). It carries out the reaction L-threonyl-[protein] + ATP = O-phospho-L-threonyl-[protein] + ADP + H(+). With respect to regulation, activated by phosphorylation on threonine and tyrosine by dual specificity kinases, MAP2K3/MKK3, MAP2K6/MKK6, MAP2K4/MKK4 and MAP2K7/MKK7. Activation by ultraviolet radiation, hyperosmotic shock, anisomycin or by TNF-alpha is mediated by MAP2K3/MKK3. Inhibited by dual specificity phosphatase DUSP1. In terms of biological role, serine/threonine kinase which acts as an essential component of the MAP kinase signal transduction pathway. MAPK13 is one of the four p38 MAPKs which play an important role in the cascades of cellular responses evoked by extracellular stimuli such as pro-inflammatory cytokines or physical stress leading to direct activation of transcription factors such as ELK1 and ATF2. Accordingly, p38 MAPKs phosphorylate a broad range of proteins and it has been estimated that they may have approximately 200 to 300 substrates each. MAPK13 is one of the less studied p38 MAPK isoforms. Some of the targets are downstream kinases such as MAPKAPK2, which are activated through phosphorylation and further phosphorylate additional targets. Plays a role in the regulation of protein translation by phosphorylating and inactivating EEF2K. Involved in cytoskeletal remodeling through phosphorylation of MAPT and STMN1. Mediates UV irradiation induced up-regulation of the gene expression of CXCL14. Plays an important role in the regulation of epidermal keratinocyte differentiation, apoptosis and skin tumor development. Phosphorylates the transcriptional activator MYB in response to stress which leads to rapid MYB degradation via a proteasome-dependent pathway. MAPK13 also phosphorylates and down-regulates PRKD1 during regulation of insulin secretion in pancreatic beta cells. This Pan troglodytes (Chimpanzee) protein is Mitogen-activated protein kinase 13 (MAPK13).